The primary structure comprises 153 residues: Cytochrome c-type biogenesis protein CcmE (153 aa).

Over 1 to 8 the chain is Cytoplasmic; that stretch reads MMTPRQRR. The chain crosses the membrane as a helical; Signal-anchor for type II membrane protein span at residues 9–29; sequence MTWVALMVAGVSLAAFFALTA. At 30–153 the chain is on the periplasmic side; sequence FQKNLLYFYT…PADYSEYRKK (124 aa). Residues His-124 and Tyr-128 each contribute to the heme site. The tract at residues 134–153 is disordered; sequence AESLKKNGGLPADYSEYRKK.

The protein belongs to the CcmE/CycJ family.

Its subcellular location is the cell inner membrane. Heme chaperone required for the biogenesis of c-type cytochromes. Transiently binds heme delivered by CcmC and transfers the heme to apo-cytochromes in a process facilitated by CcmF and CcmH. This chain is Cytochrome c-type biogenesis protein CcmE, found in Methylococcus capsulatus (strain ATCC 33009 / NCIMB 11132 / Bath).